The primary structure comprises 438 residues: Ribosomal protein uS12 methylthiotransferase RimO (438 aa).

The MTTase N-terminal domain occupies 1 to 116 (MNVGFISLGC…IWKEIENLLD (116 aa)). [4Fe-4S] cluster-binding residues include Cys-10, Cys-46, Cys-79, Cys-147, Cys-151, and Cys-154. Residues 133–363 (TTGSNMAYLK…MALQEKISRE (231 aa)) enclose the Radical SAM core domain. The 70-residue stretch at 366-435 (EQKVGNVYKV…DYDLFGELYT (70 aa)) folds into the TRAM domain.

The protein belongs to the methylthiotransferase family. RimO subfamily. The cofactor is [4Fe-4S] cluster.

Its subcellular location is the cytoplasm. The enzyme catalyses L-aspartate(89)-[ribosomal protein uS12]-hydrogen + (sulfur carrier)-SH + AH2 + 2 S-adenosyl-L-methionine = 3-methylsulfanyl-L-aspartate(89)-[ribosomal protein uS12]-hydrogen + (sulfur carrier)-H + 5'-deoxyadenosine + L-methionine + A + S-adenosyl-L-homocysteine + 2 H(+). In terms of biological role, catalyzes the methylthiolation of an aspartic acid residue of ribosomal protein uS12. The polypeptide is Ribosomal protein uS12 methylthiotransferase RimO (Alkaliphilus oremlandii (strain OhILAs) (Clostridium oremlandii (strain OhILAs))).